We begin with the raw amino-acid sequence, 306 residues long: Ribosomal protein L11 methyltransferase (306 aa).

S-adenosyl-L-methionine-binding residues include Thr154, Gly179, Asp201, and Asn242.

This sequence belongs to the methyltransferase superfamily. PrmA family.

Its subcellular location is the cytoplasm. It catalyses the reaction L-lysyl-[protein] + 3 S-adenosyl-L-methionine = N(6),N(6),N(6)-trimethyl-L-lysyl-[protein] + 3 S-adenosyl-L-homocysteine + 3 H(+). In terms of biological role, methylates ribosomal protein L11. This chain is Ribosomal protein L11 methyltransferase, found in Stenotrophomonas maltophilia (strain R551-3).